The primary structure comprises 389 residues: MDSLGTAATQFLFDLFKELNKTNDGNVFFSPVGISTAIGMIILGTRGATASELQKVLYTEQGTESSRIKSEEEEIEKREEIHHQLQMLLTEISKFSNDYDLIISNRLFGEKTYLFLQKYIDYVEKYYHASLEPVDFVNAADESRKKINSWVESQTNVKVKDLFPEGSLNSSTKLVLINTVYFKGLWDREFKKEHTKEEDFWLNKNLSKPVQMMALCSSFNFTFLEDLQAKIVGIPYKNNDISMFVLLPNDIDGLEKIMDKMSPEKLVEWTSPGHLEQRRVDLRLPRLQVEETYDLEPVLEAVGIHSAFSEHADYSGMSARSGLHAQNFLHRSFLVVTEEGVEATAGTGVGLKVSSAASCELVHCNHPFLFFIRHRESDSILFFGKFSSP.

This sequence belongs to the serpin family. Ov-serpin subfamily.

Its subcellular location is the cytoplasm. May play a role in the proliferation or differentiation of keratinocytes. This is Serpin B13 (Serpinb13) from Mus musculus (Mouse).